Consider the following 815-residue polypeptide: Serotype-specific mannosyltransferase WbdA (815 aa).

The alpha-(1-&gt;2)-mannosyltransferase stretch occupies residues 1–374; sequence MSRAIIENAG…WANTAHLAID (374 aa). The alpha-(1-&gt;3)-mannosyltransferase stretch occupies residues 431-804; that stretch reads KLLVDISVLA…WKQSAELLLK (374 aa).

This sequence belongs to the glycosyltransferase group 1 family. Glycosyltransferase 4 subfamily.

The protein resides in the cell inner membrane. It participates in bacterial outer membrane biogenesis; LPS O-antigen biosynthesis. In terms of biological role, mannosyltransferase involved in the biosynthesis of the repeat unit of the lipopolysaccharide (LPS) O-antigen region. This is Serotype-specific mannosyltransferase WbdA from Escherichia coli.